A 422-amino-acid polypeptide reads, in one-letter code: Glucuronoxylanase XynC (422 aa).

The first 32 residues, 1 to 32 (MIPRIKKTICVLLVCFTMLSVMLGPGATEVLA), serve as a signal peptide directing secretion. Residue E171 is the Proton donor of the active site. The Nucleophile role is filled by E260.

It belongs to the glycosyl hydrolase 30 family.

It is found in the secreted. It catalyses the reaction Endohydrolysis of (1-&gt;4)-beta-D-xylosyl links in some glucuronoarabinoxylans.. Its pathway is glycan degradation; xylan degradation. Functionally, catalyzes the depolymerization of methylglucuronoxylan (MeGAXn) from different sources. It cleaves the beta-1,4-xylosidic bond penultimate to that linking carbon one of the xylose residue substituted with alpha-1,2-linked 4-O-methyl-D-glucuronate (MeGA). The sequence is that of Glucuronoxylanase XynC (xynC) from Bacillus subtilis (strain 168).